A 717-amino-acid chain; its full sequence is Coupling protein TraD (717 aa).

Topologically, residues 1–27 (MSFNAKDMTQGGQIASMRIRMFSQIAN) are cytoplasmic. Residues 28 to 47 (IMLYCLFIFFWILVGLVLWI) traverse the membrane as a helical segment. The Periplasmic portion of the chain corresponds to 48-104 (KISWQTFVNGCIYWWCTTLEGMRDLIKSQPVYEIQYYGKTFRMNAAQVLHDKYMIWC). A helical transmembrane segment spans residues 105–130 (SEQLWSAFVLAAVVALVICLITFFVV). Over 131–717 (SWILGRQGKQ…GEDVEPGDDF (587 aa)) the chain is Cytoplasmic. 192–199 (GTVGAGKS) contacts ATP. Disordered regions lie at residues 614–639 (EDVTQAEQPQQPVSPAINDKKSDSGV) and 650–669 (LKMKPEEEMEQQLPPGISES).

Belongs to the TrwB coupling protein family. In terms of assembly, interacts with relaxosome component TraM. May form a hexamer in the membrane.

It localises to the cell inner membrane. Its function is as follows. Conjugative DNA transfer (CDT) is the unidirectional transfer of ssDNA plasmid from a donor to a recipient cell. It is the central mechanism by which antibiotic resistance and virulence factors are propagated in bacterial populations. Couples the transferosome to a type IV secretion system. Probably forms a pore through which single-stranded plasmid DNA is transferred to the secretion system. The last 37 residues are important for determining plasmid specificity and transfer efficiency, with additional specificity conferred by the TraD-TraM pair. This chain is Coupling protein TraD (traD), found in Escherichia coli (strain K12).